Consider the following 440-residue polypeptide: tRNA modification GTPase MnmE (440 aa).

Positions 34, 94, and 134 each coordinate (6S)-5-formyl-5,6,7,8-tetrahydrofolate. The TrmE-type G domain occupies 229 to 367 (GVRVVLAGPP…LVALLLDRAA (139 aa)). Asn239 contributes to the K(+) binding site. GTP is bound by residues 239–244 (NAGKST), 258–264 (TPIAGTT), 283–286 (DTAG), and 348–350 (SAR). Ser243 lines the Mg(2+) pocket. Positions 258, 260, and 263 each coordinate K(+). Thr264 contacts Mg(2+). Lys440 lines the (6S)-5-formyl-5,6,7,8-tetrahydrofolate pocket.

The protein belongs to the TRAFAC class TrmE-Era-EngA-EngB-Septin-like GTPase superfamily. TrmE GTPase family. As to quaternary structure, homodimer. Heterotetramer of two MnmE and two MnmG subunits. It depends on K(+) as a cofactor.

Its subcellular location is the cytoplasm. Its function is as follows. Exhibits a very high intrinsic GTPase hydrolysis rate. Involved in the addition of a carboxymethylaminomethyl (cmnm) group at the wobble position (U34) of certain tRNAs, forming tRNA-cmnm(5)s(2)U34. This is tRNA modification GTPase MnmE from Rhizorhabdus wittichii (strain DSM 6014 / CCUG 31198 / JCM 15750 / NBRC 105917 / EY 4224 / RW1) (Sphingomonas wittichii).